The following is a 216-amino-acid chain: Probable nicotinate-nucleotide adenylyltransferase (216 aa).

The protein belongs to the NadD family.

The enzyme catalyses nicotinate beta-D-ribonucleotide + ATP + H(+) = deamido-NAD(+) + diphosphate. The protein operates within cofactor biosynthesis; NAD(+) biosynthesis; deamido-NAD(+) from nicotinate D-ribonucleotide: step 1/1. In terms of biological role, catalyzes the reversible adenylation of nicotinate mononucleotide (NaMN) to nicotinic acid adenine dinucleotide (NaAD). This Maridesulfovibrio salexigens (strain ATCC 14822 / DSM 2638 / NCIMB 8403 / VKM B-1763) (Desulfovibrio salexigens) protein is Probable nicotinate-nucleotide adenylyltransferase.